A 142-amino-acid chain; its full sequence is Small ribosomal subunit protein bS18c (142 aa).

Residues 1–21 (MDRITGPFRKSKKSFRKPLPP) are disordered.

The protein belongs to the bacterial ribosomal protein bS18 family. Part of the 30S ribosomal subunit.

It localises to the plastid. In Cuscuta gronovii (Common dodder), this protein is Small ribosomal subunit protein bS18c.